The following is a 457-amino-acid chain: Siroheme synthase (457 aa).

Positions 1 to 204 are precorrin-2 dehydrogenase /sirohydrochlorin ferrochelatase; sequence MDHLPIFCQL…NDQKAITETT (204 aa). NAD(+)-binding positions include 22–23 and 43–44; these read DV and LA. At Ser-128 the chain carries Phosphoserine. The tract at residues 216 to 457 is uroporphyrinogen-III C-methyltransferase; sequence GEVVLVGAGP…RDKLNWFSNH (242 aa). S-adenosyl-L-methionine is bound at residue Pro-225. Asp-248 (proton acceptor) is an active-site residue. The Proton donor role is filled by Lys-270. Residues 301 to 303, Ile-306, 331 to 332, Met-382, and Gly-411 each bind S-adenosyl-L-methionine; these read GGD and TA.

In the N-terminal section; belongs to the precorrin-2 dehydrogenase / sirohydrochlorin ferrochelatase family. The protein in the C-terminal section; belongs to the precorrin methyltransferase family.

The catalysed reaction is uroporphyrinogen III + 2 S-adenosyl-L-methionine = precorrin-2 + 2 S-adenosyl-L-homocysteine + H(+). It catalyses the reaction precorrin-2 + NAD(+) = sirohydrochlorin + NADH + 2 H(+). The enzyme catalyses siroheme + 2 H(+) = sirohydrochlorin + Fe(2+). Its pathway is cofactor biosynthesis; adenosylcobalamin biosynthesis; precorrin-2 from uroporphyrinogen III: step 1/1. The protein operates within cofactor biosynthesis; adenosylcobalamin biosynthesis; sirohydrochlorin from precorrin-2: step 1/1. It participates in porphyrin-containing compound metabolism; siroheme biosynthesis; precorrin-2 from uroporphyrinogen III: step 1/1. It functions in the pathway porphyrin-containing compound metabolism; siroheme biosynthesis; siroheme from sirohydrochlorin: step 1/1. Its pathway is porphyrin-containing compound metabolism; siroheme biosynthesis; sirohydrochlorin from precorrin-2: step 1/1. Its function is as follows. Multifunctional enzyme that catalyzes the SAM-dependent methylations of uroporphyrinogen III at position C-2 and C-7 to form precorrin-2 via precorrin-1. Then it catalyzes the NAD-dependent ring dehydrogenation of precorrin-2 to yield sirohydrochlorin. Finally, it catalyzes the ferrochelation of sirohydrochlorin to yield siroheme. In Shigella boydii serotype 18 (strain CDC 3083-94 / BS512), this protein is Siroheme synthase.